The following is a 177-amino-acid chain: MEAGKISTRYARAIYEYALEQGNETILYKGMQSLAKHFAMYPVLKKSINDPTLSDENKIKLLIAACRIDSNKTLKQAIKVIVKNGRAYYIERIARMYEKEYRQSKGLVLAQLTTVGLTTNNEAKKLLIKFLSNKTNGQIEFKTILNLDIIGGFILEIEDLLLDASVKRQLNQIKCQI.

The protein belongs to the ATPase delta chain family. F-type ATPases have 2 components, F(1) - the catalytic core - and F(0) - the membrane proton channel. F(1) has five subunits: alpha(3), beta(3), gamma(1), delta(1), epsilon(1). F(0) has three main subunits: a(1), b(2) and c(10-14). The alpha and beta chains form an alternating ring which encloses part of the gamma chain. F(1) is attached to F(0) by a central stalk formed by the gamma and epsilon chains, while a peripheral stalk is formed by the delta and b chains.

The protein resides in the cell inner membrane. F(1)F(0) ATP synthase produces ATP from ADP in the presence of a proton or sodium gradient. F-type ATPases consist of two structural domains, F(1) containing the extramembraneous catalytic core and F(0) containing the membrane proton channel, linked together by a central stalk and a peripheral stalk. During catalysis, ATP synthesis in the catalytic domain of F(1) is coupled via a rotary mechanism of the central stalk subunits to proton translocation. In terms of biological role, this protein is part of the stalk that links CF(0) to CF(1). It either transmits conformational changes from CF(0) to CF(1) or is implicated in proton conduction. In Azobacteroides pseudotrichonymphae genomovar. CFP2, this protein is ATP synthase subunit delta.